A 916-amino-acid polypeptide reads, in one-letter code: DNA gyrase subunit A (916 aa).

Residues 42-544 (LPDVRDGLKP…FGGDIADEDL (503 aa)) form the Topo IIA-type catalytic domain. The O-(5'-phospho-DNA)-tyrosine intermediate role is filled by Y130. The GyrA-box signature appears at 571-577 (QRRGGRG). A compositionally biased stretch (acidic residues) spans 739–748 (SDDLEDETAD). Disordered stretches follow at residues 739-774 (SDDLEDETADNENTLPSGKNGVRPSGRGSGGLRGMR) and 897-916 (ESELSGASVISNVTEPEAEN).

The protein belongs to the type II topoisomerase GyrA/ParC subunit family. Heterotetramer, composed of two GyrA and two GyrB chains. In the heterotetramer, GyrA contains the active site tyrosine that forms a transient covalent intermediate with DNA, while GyrB binds cofactors and catalyzes ATP hydrolysis.

The protein localises to the cytoplasm. The catalysed reaction is ATP-dependent breakage, passage and rejoining of double-stranded DNA.. In terms of biological role, a type II topoisomerase that negatively supercoils closed circular double-stranded (ds) DNA in an ATP-dependent manner to modulate DNA topology and maintain chromosomes in an underwound state. Negative supercoiling favors strand separation, and DNA replication, transcription, recombination and repair, all of which involve strand separation. Also able to catalyze the interconversion of other topological isomers of dsDNA rings, including catenanes and knotted rings. Type II topoisomerases break and join 2 DNA strands simultaneously in an ATP-dependent manner. The chain is DNA gyrase subunit A from Neisseria gonorrhoeae.